The chain runs to 295 residues: UDP-N-acetylenolpyruvoylglucosamine reductase (295 aa).

Positions 26–189 constitute an FAD-binding PCMH-type domain; that stretch reads VGGRADILFK…VEAEFKGVNS (164 aa). R169 is an active-site residue. The active-site Proton donor is C218. E288 is a catalytic residue.

It belongs to the MurB family. It depends on FAD as a cofactor.

It localises to the cytoplasm. The enzyme catalyses UDP-N-acetyl-alpha-D-muramate + NADP(+) = UDP-N-acetyl-3-O-(1-carboxyvinyl)-alpha-D-glucosamine + NADPH + H(+). It functions in the pathway cell wall biogenesis; peptidoglycan biosynthesis. In terms of biological role, cell wall formation. The chain is UDP-N-acetylenolpyruvoylglucosamine reductase from Wolbachia sp. subsp. Drosophila simulans (strain wRi).